We begin with the raw amino-acid sequence, 354 residues long: Protein-arginine kinase (354 aa).

The Phosphagen kinase C-terminal domain occupies 24–254 (IVLSSRIRLA…QQIIQQEKMA (231 aa)). ATP-binding positions include 27–31 (SSRIR), His-92, Arg-125, 176–180 (RASVM), and 207–212 (RGIYGE). The RDXXRA motif of the pArg binding pocket involved in allosteric regulation motif lies at 337–342 (RDYRRA).

It belongs to the ATP:guanido phosphotransferase family.

It catalyses the reaction L-arginyl-[protein] + ATP = N(omega)-phospho-L-arginyl-[protein] + ADP + H(+). With respect to regulation, appears to be allosterically activated by the binding of pArg-containing polypeptides to the pArg-binding pocket localized in the C-terminal domain of McsB. Catalyzes the specific phosphorylation of arginine residues in a large number of proteins. Is part of the bacterial stress response system. Protein arginine phosphorylation has a physiologically important role and is involved in the regulation of many critical cellular processes, such as protein homeostasis, motility, competence, and stringent and stress responses, by regulating gene expression and protein activity. This chain is Protein-arginine kinase, found in Bacillus anthracis (strain A0248).